A 574-amino-acid polypeptide reads, in one-letter code: Probable cytochrome c oxidase subunit 1 (574 aa).

A helical membrane pass occupies residues 40–60 (IGIMYCVACFIFFFVGGLLAL). Histidine 86 provides a ligand contact to Fe(II)-heme a. A run of 6 helical transmembrane segments spans residues 89-109 (IMLL…VLPL), 121-141 (LNAF…AGFI), 170-190 (LWIM…VNMI), 213-233 (ILVT…ALFG), 258-278 (LFWF…FGIV), and 290-310 (IFGY…SVAV). Positions 264 and 268 each coordinate Cu cation. Positions 264–268 (HPEVY) form a cross-link, 1'-histidyl-3'-tyrosine (His-Tyr). Histidine 313 and histidine 314 together coordinate Cu cation. 2 helical membrane-spanning segments follow: residues 315 to 335 (MFAT…LIAV) and 359 to 379 (MLFS…GVLL). Histidine 397 provides a ligand contact to heme a3. Helical transmembrane passes span 398–418 (FHYV…YFWF), 433–453 (LHFW…HWLG), and 476–496 (VSTI…WNVF). Residue histidine 399 coordinates Fe(II)-heme a.

This sequence belongs to the heme-copper respiratory oxidase family. Associates with subunits II, III and IV to form cytochrome c oxidase. The cofactor is Cu(2+). It depends on heme as a cofactor.

The protein localises to the cell membrane. The catalysed reaction is 4 Fe(II)-[cytochrome c] + O2 + 8 H(+)(in) = 4 Fe(III)-[cytochrome c] + 2 H2O + 4 H(+)(out). It functions in the pathway energy metabolism; oxidative phosphorylation. In terms of biological role, cytochrome c oxidase is the component of the respiratory chain that catalyzes the reduction of oxygen to water. Subunits 1-3 form the functional core of the enzyme complex. CO I is the catalytic subunit of the enzyme. Electrons originating in cytochrome c are transferred via the copper A center of subunit 2 and heme A of subunit 1 to the bimetallic center formed by heme A3 and copper B. This chain is Probable cytochrome c oxidase subunit 1 (ctaD), found in Mycobacterium leprae (strain TN).